A 201-amino-acid polypeptide reads, in one-letter code: MNMEVDTVTRKPRILLAASGSVASIKFSNLCHCFSEWAEVKAVASKSSLNFVDKPSLPQNVTLYTDEDEWSSWNKIGDPVLHIELRRWADVMIIAPLSANTLAKIAGGLCDNLLTCIVRAWDYSKPLFVAPAMNTLMWNNPFTERHLVLLDELGITLIPPIKKKLACGDYGNGAMAEPSLIYSTVRLFWESQARKQRDGTS.

Residues 20–22 (GSV), 45–47 (SKS), 98–101 (SANT), and alanine 132 each bind FMN. Residues asparagine 134 and 164 to 166 (KLA) contribute to the substrate site. Catalysis depends on cysteine 167, which acts as the Proton donor. Residue methionine 175 participates in substrate binding.

The protein belongs to the HFCD (homooligomeric flavin containing Cys decarboxylase) superfamily. Homotrimer. It depends on FMN as a cofactor. In terms of tissue distribution, expressed in roots, shoots, leaves, flowers, developing siliques and seeds.

The enzyme catalyses N-[(R)-4-phosphopantothenoyl]-L-cysteine + H(+) = (R)-4'-phosphopantetheine + CO2. The protein operates within cofactor biosynthesis; coenzyme A biosynthesis; CoA from (R)-pantothenate: step 3/5. Its function is as follows. Involved in plant growth and salt and osmotic tolerance. Catalyzes the decarboxylation of 4'-phosphopantothenoylcysteine to 4'-phosphopantetheine, a key step in coenzyme A biosynthesis. The enzyme is also able to decarboxylate pantothenoylcysteine to pantothenoylcysteamine. The chain is Probable phosphopantothenoylcysteine decarboxylase (HAL3B) from Arabidopsis thaliana (Mouse-ear cress).